Consider the following 325-residue polypeptide: Undecaprenyl-phosphate 4-deoxy-4-formamido-L-arabinose transferase (325 aa).

2 helical membrane passes run 236-256 (LSIF…LLIL) and 270-290 (VFTL…GMGL).

This sequence belongs to the glycosyltransferase 2 family.

Its subcellular location is the cell inner membrane. It catalyses the reaction UDP-4-deoxy-4-formamido-beta-L-arabinose + di-trans,octa-cis-undecaprenyl phosphate = 4-deoxy-4-formamido-alpha-L-arabinopyranosyl di-trans,octa-cis-undecaprenyl phosphate + UDP. It functions in the pathway glycolipid biosynthesis; 4-amino-4-deoxy-alpha-L-arabinose undecaprenyl phosphate biosynthesis; 4-amino-4-deoxy-alpha-L-arabinose undecaprenyl phosphate from UDP-4-deoxy-4-formamido-beta-L-arabinose and undecaprenyl phosphate: step 1/2. The protein operates within bacterial outer membrane biogenesis; lipopolysaccharide biosynthesis. Functionally, catalyzes the transfer of 4-deoxy-4-formamido-L-arabinose from UDP to undecaprenyl phosphate. The modified arabinose is attached to lipid A and is required for resistance to polymyxin and cationic antimicrobial peptides. The chain is Undecaprenyl-phosphate 4-deoxy-4-formamido-L-arabinose transferase from Edwardsiella ictaluri (strain 93-146).